A 101-amino-acid polypeptide reads, in one-letter code: MAGQKIRIRLKAYDHEAIDASARKIVETVTRTGASVVGPVPLPTEKNVYCVIRSPHKYKDSREHFEMRTHKRLIDILDPTPKTVDALMRIDLPASVDVNIQ.

The protein belongs to the universal ribosomal protein uS10 family. As to quaternary structure, part of the 30S ribosomal subunit.

Functionally, involved in the binding of tRNA to the ribosomes. The protein is Small ribosomal subunit protein uS10 of Mycobacteroides abscessus (strain ATCC 19977 / DSM 44196 / CCUG 20993 / CIP 104536 / JCM 13569 / NCTC 13031 / TMC 1543 / L948) (Mycobacterium abscessus).